The chain runs to 994 residues: Tyrosine-protein kinase Mer (994 aa).

The first 18 residues, 1–18, serve as a signal peptide directing secretion; that stretch reads MVLAPLLLGLLLLPALWS. At 19 to 497 the chain is on the extracellular side; the sequence is GGTAEKWEET…TPAPGNTDSM (479 aa). A disordered region spans residues 44–78; the sequence is VNHRPFSAPHSSRDQLPPPQTGRSHPAHTAAPQVT. Ig-like C2-type domains follow at residues 75 to 181 and 192 to 268; these read PQVT…EIVS and PYFI…LTVS. Asn91, Asn108, Asn165, Asn202, Asn210, Asn229, Asn289, Asn311, Asn324, Asn331, Asn349, Asn384, Asn390, Asn437, and Asn449 each carry an N-linked (GlcNAc...) asparagine glycan. The cysteines at positions 109 and 170 are disulfide-linked. Cys213 and Cys257 form a disulfide bridge. Fibronectin type-III domains are found at residues 281 to 376 and 381 to 478; these read PPTE…TTEG and APLN…IPEH. The helical transmembrane segment at 498 to 518 threads the bilayer; that stretch reads FIILGCFCGFILIGLILCISL. Residues 519–994 are Cytoplasmic-facing; that stretch reads ALRRRVQETK…DSLEDSEVLM (476 aa). Ser538 is subject to Phosphoserine. The Protein kinase domain occupies 582-852; that stretch reads LVLGKVLGEG…SVLRLQLEKL (271 aa). ATP contacts are provided by residues 588 to 596 and Lys610; that span reads LGEGEFGSV. Residue Asp718 is the Proton acceptor of the active site. 4 positions are modified to phosphotyrosine; by autocatalysis: Tyr744, Tyr748, Tyr749, and Tyr867.

This sequence belongs to the protein kinase superfamily. Tyr protein kinase family. AXL/UFO subfamily. In terms of assembly, interacts (upon activation) with TNK2; stimulates TNK2 autophosphorylation. Interacts (via N-terminus) with extracellular ligands LGALS3, TUB, TULP1 and GAS6. Interacts with VAV1 in a phosphotyrosine-independent manner. Interacts with TIMD4; this interaction enhances TIMD4-mediated efferocytosis. In terms of processing, autophosphorylated on Tyr-744, Tyr-748 and Tyr-749 in the activation loop allowing full activity. Autophosphorylated on Tyr-867 leading to recruitment of downstream partners of the signaling cascade such as PLCG2. In terms of tissue distribution, expressed predominantly in the hematopoietic lineages: macrophages, NK cells, NKT cells, dendritic cells and platelets.

It localises to the cell membrane. It carries out the reaction L-tyrosyl-[protein] + ATP = O-phospho-L-tyrosyl-[protein] + ADP + H(+). In terms of biological role, receptor tyrosine kinase that transduces signals from the extracellular matrix into the cytoplasm by binding to several ligands including LGALS3, TUB, TULP1 or GAS6. Regulates many physiological processes including cell survival, migration, differentiation, and phagocytosis of apoptotic cells (efferocytosis). Ligand binding at the cell surface induces autophosphorylation of MERTK on its intracellular domain that provides docking sites for downstream signaling molecules. Following activation by ligand, interacts with GRB2 or PLCG2 and induces phosphorylation of MAPK1, MAPK2, FAK/PTK2 or RAC1. MERTK signaling plays a role in various processes such as macrophage clearance of apoptotic cells, platelet aggregation, cytoskeleton reorganization and engulfment. Functions in the retinal pigment epithelium (RPE) as a regulator of rod outer segments fragments phagocytosis. Also plays an important role in inhibition of Toll-like receptors (TLRs)-mediated innate immune response by activating STAT1, which selectively induces production of suppressors of cytokine signaling SOCS1 and SOCS3. The polypeptide is Tyrosine-protein kinase Mer (Mertk) (Mus musculus (Mouse)).